The sequence spans 257 residues: NAD-capped RNA hydrolase NudC (257 aa).

Arg69 contacts substrate. The Zn(2+) site is built by Cys98 and Cys101. Glu111 is a binding site for substrate. 2 residues coordinate Zn(2+): Cys116 and Cys119. Substrate is bound at residue Tyr124. Residues 125–248 form the Nudix hydrolase domain; sequence PQIAPCIIVA…TVARRLIEDT (124 aa). Residues Ala158, Glu174, and Glu178 each coordinate a divalent metal cation. Residues 159 to 180 carry the Nudix box motif; that stretch reads GFVEVGETLEQAVAREVMEESG. 192–199 contacts substrate; it reads QPWPFPQS. Glu219 is an a divalent metal cation binding site. Position 241 (Ala241) interacts with substrate.

Belongs to the Nudix hydrolase family. NudC subfamily. As to quaternary structure, homodimer. It depends on Mg(2+) as a cofactor. Mn(2+) serves as cofactor. The cofactor is Zn(2+).

It catalyses the reaction a 5'-end NAD(+)-phospho-ribonucleoside in mRNA + H2O = a 5'-end phospho-adenosine-phospho-ribonucleoside in mRNA + beta-nicotinamide D-ribonucleotide + 2 H(+). It carries out the reaction NAD(+) + H2O = beta-nicotinamide D-ribonucleotide + AMP + 2 H(+). The catalysed reaction is NADH + H2O = reduced beta-nicotinamide D-ribonucleotide + AMP + 2 H(+). Functionally, mRNA decapping enzyme that specifically removes the nicotinamide adenine dinucleotide (NAD) cap from a subset of mRNAs by hydrolyzing the diphosphate linkage to produce nicotinamide mononucleotide (NMN) and 5' monophosphate mRNA. The NAD-cap is present at the 5'-end of some mRNAs and stabilizes RNA against 5'-processing. Has preference for mRNAs with a 5'-end purine. Catalyzes the hydrolysis of a broad range of dinucleotide pyrophosphates. In Salmonella typhi, this protein is NAD-capped RNA hydrolase NudC.